Here is a 477-residue protein sequence, read N- to C-terminus: Aspartyl/glutamyl-tRNA(Asn/Gln) amidotransferase subunit B (477 aa).

Belongs to the GatB/GatE family. GatB subfamily. Heterotrimer of A, B and C subunits.

It carries out the reaction L-glutamyl-tRNA(Gln) + L-glutamine + ATP + H2O = L-glutaminyl-tRNA(Gln) + L-glutamate + ADP + phosphate + H(+). The enzyme catalyses L-aspartyl-tRNA(Asn) + L-glutamine + ATP + H2O = L-asparaginyl-tRNA(Asn) + L-glutamate + ADP + phosphate + 2 H(+). Functionally, allows the formation of correctly charged Asn-tRNA(Asn) or Gln-tRNA(Gln) through the transamidation of misacylated Asp-tRNA(Asn) or Glu-tRNA(Gln) in organisms which lack either or both of asparaginyl-tRNA or glutaminyl-tRNA synthetases. The reaction takes place in the presence of glutamine and ATP through an activated phospho-Asp-tRNA(Asn) or phospho-Glu-tRNA(Gln). The protein is Aspartyl/glutamyl-tRNA(Asn/Gln) amidotransferase subunit B of Coxiella burnetii (strain CbuG_Q212) (Coxiella burnetii (strain Q212)).